The chain runs to 141 residues: Subtilase cytotoxin subunit B (141 aa).

The N-terminal stretch at Met1–Ala23 is a signal peptide. Residues Met33 to Ser35 and Gln59 contribute to the N-glycoloyl-alpha-neuraminate site. Residues Tyr89–Gly94 are hydrophobic patch important for binding to SubA. Position 101 (Tyr101) interacts with N-glycoloyl-alpha-neuraminate.

Forms a complex with SubA with the stoichiometry SubA1:SubB5 (called SubAB5). Each SubB subunit makes different contacts with the single SubA subunit. This subunit alone forms pentamers.

Its subcellular location is the secreted. It is found in the host cytoplasm. It localises to the host cytosol. The protein localises to the host endoplasmic reticulum lumen. Functionally, receptor-binding subunit of subtilase cytotoxin SubAB5. Required for receptor-binding and thus correct trafficking in the host cell. Has specificity for host glycans terminating in the sialic acid N-glycolyl-alpha-neuraminic acid (Neu5Gc); each subunit in the SubB pentamer binds one Neu5Gc. The protease subunit (SubA) cleaves host BiP/HSPA5, inducing the host endoplasmic reticulum stress response and eventual cell death. Culture supernatant of E.coli expressing both subA and subB are toxic for Vero cells (African green monkey kidney cell line), Chinese hamster ovary cells and Hct-8 cells (human colonic epithelial cell line); the subunits are not toxic individually. Purified SubAB5 is highly toxic, &lt;0.1 pg is able to kill at least 50% of 30'000 Vero cells in a microtiter plate assay after 3 days; no cytotoxicity is seen at 24 hours. Preabsorption with cells expressing a ganglioside GM2 mimic reduced cytotoxicity of SubAB5 by 93% in the Vero cytotoxicity assay. Intraperitoneal injection of 200 ng of purified SubAB5 kills mice; the higher the dose the faster the mice die. Animals injected with purified SubAB5 have microvascular thrombi in the brain and other organs, including the renal tubules and glomeruli. Mice fed E.coli cells expressing cloned SubAB5 experience drastic weight loss and appear ill and lethargic. SubB alone at 2.5 ug/ml causes vacuolation of Vero cells, which requires the V-type ATPase proton pump; treated cells die. Protein synthesis in Vero cells is transiently inhibited by SubAB5; both subunits are required for this effect. Inhibition of protein synthesis is prevented by brefeldin A; cells are arrested in the G1 phase. SubAB5 at 100 ng/ml induced caspase-dependent apoptosis in Vero cells through mitochondrial membrane damage. The protein is Subtilase cytotoxin subunit B of Escherichia coli.